A 1369-amino-acid polypeptide reads, in one-letter code: DNA-directed RNA polymerase subunit beta (1369 aa).

The protein belongs to the RNA polymerase beta chain family. The RNAP catalytic core consists of 2 alpha, 1 beta, 1 beta' and 1 omega subunit. When a sigma factor is associated with the core the holoenzyme is formed, which can initiate transcription.

The enzyme catalyses RNA(n) + a ribonucleoside 5'-triphosphate = RNA(n+1) + diphosphate. Functionally, DNA-dependent RNA polymerase catalyzes the transcription of DNA into RNA using the four ribonucleoside triphosphates as substrates. This chain is DNA-directed RNA polymerase subunit beta, found in Solidesulfovibrio magneticus (strain ATCC 700980 / DSM 13731 / RS-1) (Desulfovibrio magneticus).